A 655-amino-acid chain; its full sequence is Mannosyl-oligosaccharide 1,2-alpha-mannosidase IA (655 aa).

Residues 1–43 (MPVGGLLPLFSSPGGGGLGSGLGGGLGGGRKGSGPAAFRLTEK) are Cytoplasmic-facing. Residues 44–64 (FVLLLVFSAFITLCFGAIFFL) traverse the membrane as a helical; Signal-anchor for type II membrane protein segment. The Lumenal segment spans residues 65–655 (PDSSKLLSGV…QKKEIDGKEK (591 aa)). The cysteines at positions 478 and 510 are disulfide-linked. Asn515 is a glycosylation site (N-linked (GlcNAc...) asparagine). The active-site Proton donor is Glu524. Residue Thr635 participates in Ca(2+) binding.

The protein belongs to the glycosyl hydrolase 47 family. Ca(2+) is required as a cofactor. N-linked glycan at Asn-515 consists of Man(6)-GlcNAc(2).

It is found in the golgi apparatus membrane. The catalysed reaction is N(4)-(alpha-D-Man-(1-&gt;2)-alpha-D-Man-(1-&gt;2)-alpha-D-Man-(1-&gt;3)-[alpha-D-Man-(1-&gt;2)-alpha-D-Man-(1-&gt;3)-[alpha-D-Man-(1-&gt;2)-alpha-D-Man-(1-&gt;6)]-alpha-D-Man-(1-&gt;6)]-beta-D-Man-(1-&gt;4)-beta-D-GlcNAc-(1-&gt;4)-beta-D-GlcNAc)-L-asparaginyl-[protein] (N-glucan mannose isomer 9A1,2,3B1,2,3) + 4 H2O = N(4)-(alpha-D-Man-(1-&gt;3)-[alpha-D-Man-(1-&gt;3)-[alpha-D-Man-(1-&gt;6)]-alpha-D-Man-(1-&gt;6)]-beta-D-Man-(1-&gt;4)-beta-D-GlcNAc-(1-&gt;4)-beta-D-GlcNAc)-L-asparaginyl-[protein] (N-glucan mannose isomer 5A1,2) + 4 beta-D-mannose. It catalyses the reaction N(4)-(alpha-D-Man-(1-&gt;2)-alpha-D-Man-(1-&gt;2)-alpha-D-Man-(1-&gt;3)-[alpha-D-Man-(1-&gt;3)-[alpha-D-Man-(1-&gt;2)-alpha-D-Man-(1-&gt;6)]-alpha-D-Man-(1-&gt;6)]-beta-D-Man-(1-&gt;4)-beta-D-GlcNAc-(1-&gt;4)-beta-D-GlcNAc)-L-asparaginyl-[protein] (N-glucan mannose isomer 8A1,2,3B1,3) + 3 H2O = N(4)-(alpha-D-Man-(1-&gt;3)-[alpha-D-Man-(1-&gt;3)-[alpha-D-Man-(1-&gt;6)]-alpha-D-Man-(1-&gt;6)]-beta-D-Man-(1-&gt;4)-beta-D-GlcNAc-(1-&gt;4)-beta-D-GlcNAc)-L-asparaginyl-[protein] (N-glucan mannose isomer 5A1,2) + 3 beta-D-mannose. It participates in protein modification; protein glycosylation. Inhibited by both 1-deoxymannojirimycin and kifunensine. Its function is as follows. Involved in the maturation of Asn-linked oligosaccharides. Progressively trim alpha-1,2-linked mannose residues from Man(9)GlcNAc(2) to produce Man(5)GlcNAc(2). The polypeptide is Mannosyl-oligosaccharide 1,2-alpha-mannosidase IA (Man1a1) (Mus musculus (Mouse)).